Here is a 261-residue protein sequence, read N- to C-terminus: Cytochrome c oxidase subunit 3 (261 aa).

Over 1–15 (MTHQTHAYHMVNPSP) the chain is Mitochondrial matrix. Residues 16 to 34 (WPLTGALSALLMTSGLAMW) form a helical membrane-spanning segment. Residues 35–40 (FHFNST) lie on the Mitochondrial intermembrane side of the membrane. Residues 41–66 (ILLMIGLTTNTLTMYQWWRDVIREST) traverse the membrane as a helical segment. At 67-72 (FQGHHT) the chain is on the mitochondrial matrix side. The chain crosses the membrane as a helical span at residues 73–105 (PTVQKGLRYGMILFIISEVLFFTGFFWAFYHSS). Over 106–128 (LAPTPELGGCWPPTGIHPLNPLE) the chain is Mitochondrial intermembrane. Residues 129 to 152 (VPLLNTSVLLASGVSITWAHHSLM) form a helical membrane-spanning segment. At 153–155 (EGN) the chain is on the mitochondrial matrix side. A helical membrane pass occupies residues 156-183 (RYPMLQALFITIALGVYFTLLQASEYYE). The Mitochondrial intermembrane portion of the chain corresponds to 184 to 190 (APFTISD). The helical transmembrane segment at 191–223 (GIYGSTFFVATGFHGLHVIIGSTFLIVCFFRQL) threads the bilayer. Residues 224–232 (KFHFTSNHH) lie on the Mitochondrial matrix side of the membrane. A helical transmembrane segment spans residues 233–256 (FGFEAAAWYWHFVDVVWLFLYVSI). At 257–261 (YWWGS) the chain is on the mitochondrial intermembrane side.

Belongs to the cytochrome c oxidase subunit 3 family. As to quaternary structure, component of the cytochrome c oxidase (complex IV, CIV), a multisubunit enzyme composed of 14 subunits. The complex is composed of a catalytic core of 3 subunits MT-CO1, MT-CO2 and MT-CO3, encoded in the mitochondrial DNA, and 11 supernumerary subunits COX4I, COX5A, COX5B, COX6A, COX6B, COX6C, COX7A, COX7B, COX7C, COX8 and NDUFA4, which are encoded in the nuclear genome. The complex exists as a monomer or a dimer and forms supercomplexes (SCs) in the inner mitochondrial membrane with NADH-ubiquinone oxidoreductase (complex I, CI) and ubiquinol-cytochrome c oxidoreductase (cytochrome b-c1 complex, complex III, CIII), resulting in different assemblies (supercomplex SCI(1)III(2)IV(1) and megacomplex MCI(2)III(2)IV(2)).

The protein resides in the mitochondrion inner membrane. It carries out the reaction 4 Fe(II)-[cytochrome c] + O2 + 8 H(+)(in) = 4 Fe(III)-[cytochrome c] + 2 H2O + 4 H(+)(out). Its function is as follows. Component of the cytochrome c oxidase, the last enzyme in the mitochondrial electron transport chain which drives oxidative phosphorylation. The respiratory chain contains 3 multisubunit complexes succinate dehydrogenase (complex II, CII), ubiquinol-cytochrome c oxidoreductase (cytochrome b-c1 complex, complex III, CIII) and cytochrome c oxidase (complex IV, CIV), that cooperate to transfer electrons derived from NADH and succinate to molecular oxygen, creating an electrochemical gradient over the inner membrane that drives transmembrane transport and the ATP synthase. Cytochrome c oxidase is the component of the respiratory chain that catalyzes the reduction of oxygen to water. Electrons originating from reduced cytochrome c in the intermembrane space (IMS) are transferred via the dinuclear copper A center (CU(A)) of subunit 2 and heme A of subunit 1 to the active site in subunit 1, a binuclear center (BNC) formed by heme A3 and copper B (CU(B)). The BNC reduces molecular oxygen to 2 water molecules using 4 electrons from cytochrome c in the IMS and 4 protons from the mitochondrial matrix. The sequence is that of Cytochrome c oxidase subunit 3 (MT-CO3) from Raphicerus melanotis (Cape grysbok).